A 423-amino-acid polypeptide reads, in one-letter code: MRFFSVFDIVKNKANQLGYTETEMYAVLKNYNVNKKDLLAYKENGVIPTDKVLNGILSYLGMTKVELELKLGRIPAGLEDVFLNNTKEIAKILENKNSVKLNEFNSIQEIKPYFYTDLGKLYNGDCLELFKQVPDENVDTIFADPPFNLDKEYDEGVTDKNSFSGYLDWYYKWIDECIRVLKPGGSLFIYNIPKWNTYLSEYLNRKLNFRNWITVDMKFGLPIQNRLYPANYSLLYYVKGDKPKTFNVQRIPLQTCPHCGREIKDYGGYKNKMNPKGVTLSDVWSDIYPVRHSSSKNRKFNELSVKLLDRIITMSTNEGDVVLDPFGGSGTTFAVSEMLGRKWIGFELGNCEIIKERLKNKDKDKKLLGKVYEEKNKLFPNRVKELRKKNGLWIDDDFRQDHEGNSKGDKKNENNDQISLSLE.

The span at 397-414 shows a compositional bias: basic and acidic residues; it reads DFRQDHEGNSKGDKKNEN. The interval 397-423 is disordered; sequence DFRQDHEGNSKGDKKNENNDQISLSLE.

The protein belongs to the N(4)/N(6)-methyltransferase family.

The enzyme catalyses a 2'-deoxycytidine in DNA + S-adenosyl-L-methionine = an N(4)-methyl-2'-deoxycytidine in DNA + S-adenosyl-L-homocysteine + H(+). Its function is as follows. A beta subtype methylase, recognizes the double-stranded sequence 5'-GGATCC-3', methylates C-5 on both strands, and protects the DNA from cleavage by the BamHI endonuclease. This chain is Type II methyltransferase M.BamHI, found in Bacillus amyloliquefaciens (Bacillus velezensis).